We begin with the raw amino-acid sequence, 261 residues long: Probable membrane transporter protein ORF9 (261 aa).

8 helical membrane-spanning segments follow: residues 8–28 (LLAF…IAGG), 29–49 (GGMI…QTLG), 78–98 (LPMA…ATIV), 100–120 (GDVL…YFGL), 133–151 (VTPF…FYDG), 152–171 (VFGP…LAGF), 189–209 (VGAF…GLLM), and 231–251 (IIKP…LADP).

It belongs to the 4-toluene sulfonate uptake permease (TSUP) (TC 2.A.102) family.

It is found in the cell membrane. The polypeptide is Probable membrane transporter protein ORF9 (Sinorhizobium sp).